The following is a 229-amino-acid chain: uncharacterized protein (229 aa).

A coiled-coil region spans residues 66–94; sequence GHEKLQIQSALRDIESAENQARVQQCNAK.

This is an uncharacterized protein from Ostreid herpesvirus 1 (isolate France) (OsHV-1).